The primary structure comprises 218 residues: MGQKVNPVGLRIGVIRDWESKWYAGKDYADFLHEDLKIREYISKRLSDASVSKVEIERAANRVNITIHTAKPGMVIGKGGSEVEALRKALNSLTGKRVHINILEIKRADLDAQLVADNIARQLENRVSFRRAQKQQIQRTMRAGAQGVKTMVSGRLGGADIARSEYYSEGTVPLHTLRADIDYATSEADTTYGKLGVKVWIYRGEVLPTKKKNEEGGK.

The region spanning 38 to 106 is the KH type-2 domain; that stretch reads IREYISKRLS…RVHINILEIK (69 aa).

This sequence belongs to the universal ribosomal protein uS3 family. Part of the 30S ribosomal subunit. Forms a tight complex with proteins S10 and S14.

Its function is as follows. Binds the lower part of the 30S subunit head. Binds mRNA in the 70S ribosome, positioning it for translation. In Bacillus subtilis (strain 168), this protein is Small ribosomal subunit protein uS3.